The primary structure comprises 236 residues: uncharacterized protein (236 aa).

This is an uncharacterized protein from Sus scrofa (Pig).